We begin with the raw amino-acid sequence, 180 residues long: uncharacterized protein (180 aa).

This is an uncharacterized protein from Staphylococcus aureus.